The sequence spans 144 residues: Large ribosomal subunit protein uL15 (144 aa).

A disordered region spans residues 1–51; that stretch reads MRLNTIKPGAGSKSAGKRVGRGIGSGLGKTCGRGHKGQKSRAGGFHKVGFE. Residues 21–31 are compositionally biased toward gly residues; the sequence is RGIGSGLGKTC.

The protein belongs to the universal ribosomal protein uL15 family. As to quaternary structure, part of the 50S ribosomal subunit.

In terms of biological role, binds to the 23S rRNA. The sequence is that of Large ribosomal subunit protein uL15 from Azoarcus sp. (strain BH72).